We begin with the raw amino-acid sequence, 369 residues long: Cytochrome P450 monooxygenase apf8 (369 aa).

Position 303 (C303) interacts with heme.

Belongs to the cytochrome P450 family. Heme is required as a cofactor.

The protein operates within secondary metabolite biosynthesis. In terms of biological role, cytochrome P450 monooxygenase; part of the gene cluster that mediates the biosynthesis of the cyclic tetrapeptide apicidin F (APF). The non-ribosomal peptide synthetase apf1 incorporates four different amino acids to produce apicidin F: L-phenylalanine, D-pipecolic acid (D-pip), N-methoxy-L-tryptophan and L-2-aminooctanedioic acid. L-Phenylalanine is the only proteinogenic amino acid directly used by apf1. The 3 other apf1 substrates are non-proteinogenic and have to be modified by other enzymes of the cluster. Lysine is converted to delta-1-pyrroline-5-carboxylate (P5C) which is reduced to L-pipecolic acid (L-pip) by apf3. L-pip is epimerized to D-pip, probably by apf1 activity, prior to incorporation. L-Tryptophan is N-oxidyzed by one of the cytochrome P450 monooxygenases (apf7 or apf8), and further methylated at the hydroxy group by the O-methyltransferase apf6 to yield N-methoxy-L-tryptophan. The synthesis of the fourth apf1 substrate is more complex. The fatty acid synthase apf5 is involved in the synthesis of the octanoic acid backbone of L-2-aminooctanedioic acid by fixing one acetyl-CoA unit and three malonyl-CoA units. Then one of the cytochrome P450 monooxygenases (apf7 or apf8) may oxidize this backbone to 2-oxooctanoic acid. The aminotransferase apf4 is predicted to catalyze the exchange of the keto group with an amino group. The next step would be the oxidation of 2-aminooctanoic acid by one of the cytochrome P450 monooxygenases (apf7 or apf8). The last step is the oxidation of 2-amino-8-hydroxyoctanoic acid to 2-aminooctanedioic acid is catalyzed by the FAD-dependent monooxygenase apf9. The sequence is that of Cytochrome P450 monooxygenase apf8 from Gibberella fujikuroi (strain CBS 195.34 / IMI 58289 / NRRL A-6831) (Bakanae and foot rot disease fungus).